Reading from the N-terminus, the 552-residue chain is Urocanate hydratase (552 aa).

NAD(+) is bound by residues 49-50 (GG), Q127, 173-175 (GMG), D193, 239-240 (NA), 260-264 (QTSAH), 270-271 (YV), and Y319. C407 is an active-site residue. Residue G489 participates in NAD(+) binding.

This sequence belongs to the urocanase family. Requires NAD(+) as cofactor.

Its subcellular location is the cytoplasm. It catalyses the reaction 4-imidazolone-5-propanoate = trans-urocanate + H2O. It functions in the pathway amino-acid degradation; L-histidine degradation into L-glutamate; N-formimidoyl-L-glutamate from L-histidine: step 2/3. In terms of biological role, catalyzes the conversion of urocanate to 4-imidazolone-5-propionate. This Bacillus cytotoxicus (strain DSM 22905 / CIP 110041 / 391-98 / NVH 391-98) protein is Urocanate hydratase.